We begin with the raw amino-acid sequence, 131 residues long: Sec-independent protein translocase protein TatB (131 aa).

A helical transmembrane segment spans residues 2–22 (FDGIGFMELLLIGILGLVVLG). Composition is skewed to polar residues over residues 68–83 (ESQGLKNLSPELQDSI) and 116–131 (AEKSTTTGANSDKPNG). Residues 68-131 (ESQGLKNLSP…TGANSDKPNG (64 aa)) are disordered.

It belongs to the TatB family. In terms of assembly, the Tat system comprises two distinct complexes: a TatABC complex, containing multiple copies of TatA, TatB and TatC subunits, and a separate TatA complex, containing only TatA subunits. Substrates initially bind to the TatABC complex, which probably triggers association of the separate TatA complex to form the active translocon.

The protein resides in the cell inner membrane. In terms of biological role, part of the twin-arginine translocation (Tat) system that transports large folded proteins containing a characteristic twin-arginine motif in their signal peptide across membranes. Together with TatC, TatB is part of a receptor directly interacting with Tat signal peptides. TatB may form an oligomeric binding site that transiently accommodates folded Tat precursor proteins before their translocation. The chain is Sec-independent protein translocase protein TatB from Shewanella pealeana (strain ATCC 700345 / ANG-SQ1).